A 1186-amino-acid polypeptide reads, in one-letter code: DNA-directed RNA polymerase subunit beta (1186 aa).

Residues 1149-1186 (KEEDDDPSTSSDDLGFNIGARPDAAAKEDQVAEEPEFQ) are disordered.

This sequence belongs to the RNA polymerase beta chain family. The RNAP catalytic core consists of 2 alpha, 1 beta, 1 beta' and 1 omega subunit. When a sigma factor is associated with the core the holoenzyme is formed, which can initiate transcription.

The enzyme catalyses RNA(n) + a ribonucleoside 5'-triphosphate = RNA(n+1) + diphosphate. Its function is as follows. DNA-dependent RNA polymerase catalyzes the transcription of DNA into RNA using the four ribonucleoside triphosphates as substrates. The polypeptide is DNA-directed RNA polymerase subunit beta (Bifidobacterium adolescentis (strain ATCC 15703 / DSM 20083 / NCTC 11814 / E194a)).